Reading from the N-terminus, the 361-residue chain is Dihydroorotate dehydrogenase (quinone) (361 aa).

FMN-binding positions include 69-73 and T93; that span reads AGFDK. K73 lines the substrate pocket. A substrate-binding site is contributed by 118–122; the sequence is NRLGF. 2 residues coordinate FMN: N147 and N180. Residue N180 participates in substrate binding. S183 (nucleophile) is an active-site residue. Substrate is bound at residue N185. The FMN site is built by K221 and T249. 250–251 serves as a coordination point for substrate; it reads NT. Residues G271, G300, and 321–322 each bind FMN; that span reads YT.

Belongs to the dihydroorotate dehydrogenase family. Type 2 subfamily. As to quaternary structure, monomer. FMN serves as cofactor.

The protein resides in the cell membrane. The catalysed reaction is (S)-dihydroorotate + a quinone = orotate + a quinol. The protein operates within pyrimidine metabolism; UMP biosynthesis via de novo pathway; orotate from (S)-dihydroorotate (quinone route): step 1/1. Its function is as follows. Catalyzes the conversion of dihydroorotate to orotate with quinone as electron acceptor. This chain is Dihydroorotate dehydrogenase (quinone), found in Roseiflexus sp. (strain RS-1).